The primary structure comprises 388 residues: 4-hydroxycoumarin synthase 2 (388 aa).

Residue cysteine 159 is part of the active site.

Belongs to the thiolase-like superfamily. Chalcone/stilbene synthases family. As to quaternary structure, homodimer.

The catalysed reaction is 2-hydroxybenzoyl-CoA + malonyl-CoA = 4-hydroxycoumarin + CO2 + 2 CoA. Its function is as follows. Type III polyketide synthase involved preferentially in the biosynthesis of 4-hydroxycoumarin from salicoyl-CoA. Can also use benzoyl-CoA and malonyl-CoA to produce 3,5-dihydroxybiphenyl as a major product and benzoyldiacetic acid lactone as a minor side product. Can also use m-hydroxybenzoyl-CoA as substrate, producing m-hydroxybenzoyl diacetic acid lactone as a derailment product. No activity with p-hydroxybenzoyl-CoA, CoA-linked cinnamic acids or acetyl-CoA. This is 4-hydroxycoumarin synthase 2 (BIS3) from Sorbus aucuparia (European mountain ash).